Reading from the N-terminus, the 257-residue chain is MKLLVKLGGTLLDSAASRDSLCLQIAAARAAGHEVTVVHGGGKQMTRYLTDRGIESRFVGGLRVTSPDTIDAVLKVFAGSVNHELVANLNRAGALAVGLSGIDSFLVEAEQMDPELGAVGRVTGSNPALLHLLTANGYVPVVACVAGDRLGQIYNVNADQMAVACASAFGACRLIFLTDVDGVMDNSNRVRPVLTAAESRQLIDEGIATGGMQAKLNAALSALADGVQQVRIAPGAAPGALQRILAGEEIGTKMVTA.

Substrate contacts are provided by residues 41–42 (GG), Arg-63, and Asn-155.

Belongs to the acetylglutamate kinase family. ArgB subfamily.

It localises to the cytoplasm. It catalyses the reaction N-acetyl-L-glutamate + ATP = N-acetyl-L-glutamyl 5-phosphate + ADP. The protein operates within amino-acid biosynthesis; L-arginine biosynthesis; N(2)-acetyl-L-ornithine from L-glutamate: step 2/4. In terms of biological role, catalyzes the ATP-dependent phosphorylation of N-acetyl-L-glutamate. In Solibacter usitatus (strain Ellin6076), this protein is Acetylglutamate kinase.